Consider the following 726-residue polypeptide: MESLVAICDTFISSIDDSGVGHVDDCVAGYFSASASQTGTPDRVARLMSERLHHPKKWILRAGLWLLSTWIGSLVLCGWRSFTGEFPYFRRFCRLPEKRREEILLNWSSSYFSLLRMLFRTIKLISALVFFTQVDEKGRNLAWKAIGYNGPSPDHSDHEVELNEEKKKKKPEEIFGPLYNGIVDLKSPREAVEKKLAGRGFAVSNQKRNTNGSSISDPVMKIQCDAVVVGSGSGGGVAAGVLAKAGYKVLVIESGNYYARSKLSLLEGQAMDDMYLSGGLLATSDTNVVILAGSTVGGGSTINWSASIKTPEHVMKEWAEKSKLEMFGSDLYREAMDVVCKRMGVQCGFVEEGFNNEVLRKGCEKLGLPVKNIPRNAPSDHYCGFCCLGCKKGQKQGTSETWLVDLVESDNGLILPGCQATEVMYDCEQGKKKKATGVAFAFGEEIYVVESRVTIVACGALRTPHLLKRSGLKNSNIGRNLCLHPVVMAWGWFPEEDKWPEKKKKSYEGGIMTAMSSVVIEETHSSYGEMVIQTPALHPGMFSGIIPWTSSKDFKTRMLKFSRTAHIFALLRDKGTGTIDSKTYIDYNLNDEDEESLKNGLERVLKILAAAGAEEIGTHHSEGRSLNVRTASSLEIERFVREESSKPLKDLSGQICSAHQMGSCRMGIRPEESAVRPTGETWEVERLFVADTSVFPTALGVNPMVTVQSIAYCIGLNVVDVLKKKK.

The helical transmembrane segment at 103 to 119 (ILLNWSSSYFSLLRMLF) threads the bilayer. 224-239 (CDAVVVGSGSGGGVAA) lines the FAD pocket. H659 (proton acceptor) is an active-site residue.

This sequence belongs to the GMC oxidoreductase family.

The protein localises to the membrane. It catalyses the reaction a long-chain primary fatty alcohol + O2 = a long-chain fatty aldehyde + H2O2. In terms of biological role, long-chain fatty alcohol oxidase involved in the omega-oxidation pathway of lipid degradation. The polypeptide is Long-chain-alcohol oxidase FAO4A (FAO4A) (Arabidopsis thaliana (Mouse-ear cress)).